We begin with the raw amino-acid sequence, 358 residues long: Bi-functional coumaroyl CoA and feruloyl CoA ortho-hydroxylase F6H2-1-1 (358 aa).

The Fe2OG dioxygenase domain maps to 207–308 (GSRRININYY…RISVPVFVNP (102 aa)). Tyr-216 is a binding site for 2-oxoglutarate. Positions 231, 233, and 289 each coordinate Fe cation. 2-oxoglutarate-binding residues include Arg-299 and Ser-301.

This sequence belongs to the iron/ascorbate-dependent oxidoreductase family. Requires L-ascorbate as cofactor. Fe(2+) is required as a cofactor. Mostly expressed in underground stems and stems, and, at low levels, in tubers, leaves and petioles.

The catalysed reaction is (E)-4-coumaroyl-CoA + 2-oxoglutarate + O2 = (E)-2,4-dihydroxycinnamoyl-CoA + succinate + CO2. It catalyses the reaction (E)-feruloyl-CoA + 2-oxoglutarate + O2 = (E)-6-hydroxyferuloyl-CoA + succinate + CO2. Its pathway is phenylpropanoid metabolism. 2-oxoglutarate (OG)- and Fe(II)-dependent dioxygenase (2OGD) involved in scopoletin and umbelliferone biosynthesis. Converts feruloyl CoA into 6'-hydroxyferuloyl CoA, and p-coumaroyl CoA into 2,4-dihydroxycinnamoyl-CoA, but has no activity with caffeoyl-CoA. The polypeptide is Bi-functional coumaroyl CoA and feruloyl CoA ortho-hydroxylase F6H2-1-1 (Ipomoea batatas (Sweet potato)).